The primary structure comprises 238 residues: 5'-deoxynucleotidase YBR242W (238 aa).

The HD domain maps to 77 to 183 (ISDHMYRLSI…VKDIDKYEML (107 aa)). A divalent metal cation is bound by residues histidine 80, histidine 108, aspartate 109, glutamate 112, aspartate 117, isoleucine 118, and aspartate 178.

Belongs to the HDDC2 family. In terms of assembly, homodimer. It depends on Mn(2+) as a cofactor. Co(2+) is required as a cofactor. Mg(2+) serves as cofactor.

The enzyme catalyses a 2'-deoxyribonucleoside 5'-phosphate + H2O = a 2'-deoxyribonucleoside + phosphate. Its function is as follows. Catalyzes the dephosphorylation of the nucleoside 5'-monophosphates deoxyadenosine monophosphate (dAMP), deoxycytidine monophosphate (dCMP), deoxyguanosine monophosphate (dGMP) and deoxythymidine monophosphate (dTMP). This Saccharomyces cerevisiae (strain ATCC 204508 / S288c) (Baker's yeast) protein is 5'-deoxynucleotidase YBR242W.